Here is a 393-residue protein sequence, read N- to C-terminus: MAVPTTRKDLMIVNMGPHHPSMHGVLRLIVTLDGEDVIDCEPIVGYLHRGMEKIAENRTIIQYLPYVTRWDYLATMFTEAITVNGPEQLGNIQVPKRASYIRVIMLELSRIASHLLWLGPFMADIGAQTPFFYILRERELIYDLFEAATGMRMMHNYFRIGGVAADLPYGWIDKCLDFCDYFLIGLTEYQKLITRNPIFLERVENVGIIGGEEAINWGLSGPMLRASGIQWDLRKVDHYECYDEFDWEVQWQKEGDSLARYLIRIGEMAESVKIIQQALEGIPGGPYENLEIRRFNRIKYPEWNDFEYRFISKKPSPAFELSKQELYVRVEAPKGELGIFLIGDQSVFPWRWKIRPPGFINLQILPQLVKKMKLADIMTILGSIDIIMGEVDR.

The protein belongs to the complex I 49 kDa subunit family. In terms of assembly, NDH is composed of at least 16 different subunits, 5 of which are encoded in the nucleus.

The protein resides in the plastid. The protein localises to the chloroplast thylakoid membrane. The catalysed reaction is a plastoquinone + NADH + (n+1) H(+)(in) = a plastoquinol + NAD(+) + n H(+)(out). The enzyme catalyses a plastoquinone + NADPH + (n+1) H(+)(in) = a plastoquinol + NADP(+) + n H(+)(out). In terms of biological role, NDH shuttles electrons from NAD(P)H:plastoquinone, via FMN and iron-sulfur (Fe-S) centers, to quinones in the photosynthetic chain and possibly in a chloroplast respiratory chain. The immediate electron acceptor for the enzyme in this species is believed to be plastoquinone. Couples the redox reaction to proton translocation, and thus conserves the redox energy in a proton gradient. In Spinacia oleracea (Spinach), this protein is NAD(P)H-quinone oxidoreductase subunit H, chloroplastic.